We begin with the raw amino-acid sequence, 478 residues long: Early growth response protein 4 (478 aa).

A disordered region spans residues 275–302 (TEGLPALLTPPGGEGGSGGEGGEFLAAP). The span at 286–296 (GGEGGSGGEGG) shows a compositional bias: gly residues. 3 consecutive C2H2-type zinc fingers follow at residues 372–396 (FACP…LRIH), 402–424 (FQCR…VRTH), and 430–452 (FACD…SKVH).

This sequence belongs to the EGR C2H2-type zinc-finger protein family.

The protein resides in the nucleus. Functionally, transcriptional regulator. Recognizes and binds to the DNA sequence 5'-GCGGGGGCG-3' (GSG). Activates the transcription of target genes whose products are required for mitogenesis and differentiation. This chain is Early growth response protein 4 (Egr4), found in Mus musculus (Mouse).